Here is a 257-residue protein sequence, read N- to C-terminus: NAD kinase (257 aa).

D44 acts as the Proton acceptor in catalysis. Residues 44-45 (DG), R49, 116-117 (NE), D146, A154, and 157-162 (TAYNLS) contribute to the NAD(+) site.

The protein belongs to the NAD kinase family. It depends on a divalent metal cation as a cofactor.

The protein resides in the cytoplasm. The enzyme catalyses NAD(+) + ATP = ADP + NADP(+) + H(+). Involved in the regulation of the intracellular balance of NAD and NADP, and is a key enzyme in the biosynthesis of NADP. Catalyzes specifically the phosphorylation on 2'-hydroxyl of the adenosine moiety of NAD to yield NADP. The sequence is that of NAD kinase from Rhizorhabdus wittichii (strain DSM 6014 / CCUG 31198 / JCM 15750 / NBRC 105917 / EY 4224 / RW1) (Sphingomonas wittichii).